A 130-amino-acid polypeptide reads, in one-letter code: Glycine cleavage system H protein (130 aa).

The region spanning 24 to 106 is the Lipoyl-binding domain; that stretch reads EYTVGITEHA…YHEGWLFRIK (83 aa). N6-lipoyllysine is present on Lys65.

The protein belongs to the GcvH family. The glycine cleavage system is composed of four proteins: P, T, L and H. (R)-lipoate is required as a cofactor.

The glycine cleavage system catalyzes the degradation of glycine. The H protein shuttles the methylamine group of glycine from the P protein to the T protein. In Photorhabdus laumondii subsp. laumondii (strain DSM 15139 / CIP 105565 / TT01) (Photorhabdus luminescens subsp. laumondii), this protein is Glycine cleavage system H protein.